The sequence spans 163 residues: UPF0262 protein RPC_4416 (163 aa).

It belongs to the UPF0262 family.

This is UPF0262 protein RPC_4416 from Rhodopseudomonas palustris (strain BisB18).